The sequence spans 146 residues: Large ribosomal subunit protein uL15 (146 aa).

Residues 1–10 show a composition bias toward basic and acidic residues; sequence MTLKLHDLRP. The tract at residues 1–41 is disordered; it reads MTLKLHDLRPARGSKIARTRVGRGDGSKGKTAGRGTKGTRA.

Belongs to the universal ribosomal protein uL15 family. In terms of assembly, part of the 50S ribosomal subunit.

Binds to the 23S rRNA. This chain is Large ribosomal subunit protein uL15, found in Mycobacterium tuberculosis (strain ATCC 25177 / H37Ra).